A 428-amino-acid chain; its full sequence is Aspartate--tRNA(Asp) ligase (428 aa).

Glu166 contacts L-aspartate. An aspartate region spans residues Gln188–Lys191. Arg210 serves as a coordination point for L-aspartate. Residues Arg210–Glu212, Arg218–Leu220, and Glu351 contribute to the ATP site. The Mg(2+) site is built by Glu351 and Ser354. 2 residues coordinate L-aspartate: Ser354 and Arg358. ATP is bound at residue Gly399–Arg402.

This sequence belongs to the class-II aminoacyl-tRNA synthetase family. Type 2 subfamily. As to quaternary structure, homodimer. Mg(2+) is required as a cofactor.

The protein resides in the cytoplasm. The enzyme catalyses tRNA(Asp) + L-aspartate + ATP = L-aspartyl-tRNA(Asp) + AMP + diphosphate. Its function is as follows. Catalyzes the attachment of L-aspartate to tRNA(Asp) in a two-step reaction: L-aspartate is first activated by ATP to form Asp-AMP and then transferred to the acceptor end of tRNA(Asp). In Thermoplasma volcanium (strain ATCC 51530 / DSM 4299 / JCM 9571 / NBRC 15438 / GSS1), this protein is Aspartate--tRNA(Asp) ligase.